A 352-amino-acid chain; its full sequence is Phosphatidylglycerol--prolipoprotein diacylglyceryl transferase (352 aa).

4 helical membrane passes run 20–40 (WYGLSYMMGFICAYILITWLA), 55–75 (FITYAAIGTLVGGRLGYVLFY), 97–117 (EGGMASHGGIIGIVIACLLYA), and 122–142 (VNSLYLLDLVAVTGPIGVFFG). R143 contributes to the a 1,2-diacyl-sn-glycero-3-phospho-(1'-sn-glycerol) binding site. Transmembrane regions (helical) follow at residues 248–268 (SQLFAAFGEGLLIFMFLFFLW), 275–295 (GFIAACFVLIYAVVRVVDEHF), and 314–334 (WLSLAMFVVGLILMVVWTRAA).

Belongs to the Lgt family.

It localises to the cell inner membrane. The enzyme catalyses L-cysteinyl-[prolipoprotein] + a 1,2-diacyl-sn-glycero-3-phospho-(1'-sn-glycerol) = an S-1,2-diacyl-sn-glyceryl-L-cysteinyl-[prolipoprotein] + sn-glycerol 1-phosphate + H(+). Its pathway is protein modification; lipoprotein biosynthesis (diacylglyceryl transfer). In terms of biological role, catalyzes the transfer of the diacylglyceryl group from phosphatidylglycerol to the sulfhydryl group of the N-terminal cysteine of a prolipoprotein, the first step in the formation of mature lipoproteins. The sequence is that of Phosphatidylglycerol--prolipoprotein diacylglyceryl transferase from Bdellovibrio bacteriovorus (strain ATCC 15356 / DSM 50701 / NCIMB 9529 / HD100).